The chain runs to 209 residues: Uracil phosphoribosyltransferase (209 aa).

5-phospho-alpha-D-ribose 1-diphosphate-binding positions include Arg79, Arg104, and 131-139; that span reads DPMLATGGS. Uracil is bound by residues Ile194 and 199–201; that span reads GDA. Asp200 provides a ligand contact to 5-phospho-alpha-D-ribose 1-diphosphate.

The protein belongs to the UPRTase family. The cofactor is Mg(2+).

It carries out the reaction UMP + diphosphate = 5-phospho-alpha-D-ribose 1-diphosphate + uracil. The protein operates within pyrimidine metabolism; UMP biosynthesis via salvage pathway; UMP from uracil: step 1/1. Allosterically activated by GTP. Functionally, catalyzes the conversion of uracil and 5-phospho-alpha-D-ribose 1-diphosphate (PRPP) to UMP and diphosphate. In Bacillus velezensis (strain DSM 23117 / BGSC 10A6 / LMG 26770 / FZB42) (Bacillus amyloliquefaciens subsp. plantarum), this protein is Uracil phosphoribosyltransferase.